Reading from the N-terminus, the 376-residue chain is 1-acyl-sn-glycerol-3-phosphate acyltransferase gamma (376 aa).

The Cytoplasmic segment spans residues 1–124 (MGLLAFLKTQ…LGSSKVLAKK (124 aa)). The HXXXXD motif motif lies at 96-101 (HNFEID). Residues 125–145 (ELLYVPLIGWTWYFLEIVFCK) traverse the membrane as a helical segment. Residues 146 to 316 (RKWEEDRDTV…TLLNFLSWAT (171 aa)) are Lumenal-facing. Residues 317–339 (ILLSPLFSFVLGVFASGSPLLIL) traverse the membrane as a helical segment. Residues 340 to 376 (TFLGFVGAASFGVRRLIGVTEIEKGSSYGNQEFKKKE) are Cytoplasmic-facing.

The protein belongs to the 1-acyl-sn-glycerol-3-phosphate acyltransferase family.

It localises to the endoplasmic reticulum membrane. It is found in the nucleus envelope. The catalysed reaction is a 1-acyl-sn-glycero-3-phosphate + an acyl-CoA = a 1,2-diacyl-sn-glycero-3-phosphate + CoA. It catalyses the reaction pentadecanoyl-CoA + 1-(9Z-octadecenoyl)-sn-glycero-3-phosphate = 1-(9Z)-octadecenoyl-2-pentadecanoyl-sn-glycero-3-phosphate + CoA. The enzyme catalyses heptadecanoyl-CoA + 1-(9Z-octadecenoyl)-sn-glycero-3-phosphate = 1-(9Z)-octadecenoyl-2-heptadecanoyl-sn-glycero-3-phosphate + CoA. It carries out the reaction 1-(9Z-octadecenoyl)-sn-glycero-3-phosphate + octadecanoyl-CoA = 1-(9Z-octadecenoyl)-2-octadecanoyl-sn-glycero-3-phosphate + CoA. The catalysed reaction is nonadecanoyl-CoA + 1-(9Z-octadecenoyl)-sn-glycero-3-phosphate = 1-(9Z)-octadecenoyl-2-nonadecanoyl-sn-glycero-3-phosphate + CoA. It catalyses the reaction 1-(9Z-octadecenoyl)-sn-glycero-3-phosphate + (5Z,8Z,11Z,14Z)-eicosatetraenoyl-CoA = 1-(9Z)-octadecenoyl-2-(5Z,8Z,11Z,14Z)-eicosatetraenoyl-sn-glycero-3-phosphate + CoA. The enzyme catalyses 1-(9Z-octadecenoyl)-sn-glycero-3-phosphate + (9Z)-octadecenoyl-CoA = 1,2-di-(9Z-octadecenoyl)-sn-glycero-3-phosphate + CoA. It carries out the reaction 1-(9Z-octadecenoyl)-sn-glycero-3-phosphate + (9Z,12Z)-octadecadienoyl-CoA = 1-(9Z)-octadecenoyl-2-(9Z,12Z)-octadecadienoyl-sn-glycero-3-phosphate + CoA. The catalysed reaction is 1-(9Z-octadecenoyl)-sn-glycero-3-phosphocholine + (5Z,8Z,11Z,14Z)-eicosatetraenoyl-CoA = 1-(9Z)-octadecenoyl-2-(5Z,8Z,11Z,14Z)-icosatetraenoyl-sn-glycero-3-phosphocholine + CoA. It catalyses the reaction 1-(9Z-octadecenoyl)-sn-glycero-3-phospho-(1D-myo-inositol) + (5Z,8Z,11Z,14Z)-eicosatetraenoyl-CoA = 1-(9Z-octadecenoyl)-2-(5Z,8Z,11Z,14Z-eicosatetraenoyl)-sn-glycero-3-phospho-1D-myo-inositol + CoA. The enzyme catalyses 1-(9Z-octadecenoyl)-sn-glycero-3-phospho-L-serine + (5Z,8Z,11Z,14Z)-eicosatetraenoyl-CoA = 1-(9Z-octadecenoyl)-2-(5Z,8Z,11Z,14Z-eicosatetraenoyl)-sn-glycero-3-phospho-L-serine + CoA. It carries out the reaction 1-hexadecanoyl-sn-glycero-3-phosphate + (9Z)-octadecenoyl-CoA = 1-hexadecanoyl-2-(9Z-octadecenoyl)-sn-glycero-3-phosphate + CoA. The catalysed reaction is 1-hexadecanoyl-sn-glycero-3-phosphate + (5Z,8Z,11Z,14Z)-eicosatetraenoyl-CoA = 1-hexadecanoyl-2-(5Z,8Z,11Z,14Z-eicosatetraenoyl)-sn-glycero-3-phosphate + CoA. It catalyses the reaction 1-heptadecanoyl-sn-glycero-3-phosphate + (5Z,8Z,11Z,14Z)-eicosatetraenoyl-CoA = 1-heptadecanoyl-2-(5Z,8Z,11Z,14Z)-eicosatetraenoyl-sn-glycero-3-phosphate + CoA. The enzyme catalyses 1-octadecanoyl-sn-glycero-3-phosphate + (9Z)-octadecenoyl-CoA = 1-octadecanoyl-2-(9Z-octadecenoyl)-sn-glycero-3-phosphate + CoA. It carries out the reaction 1-octadecanoyl-sn-glycero-3-phosphate + (5Z,8Z,11Z,14Z)-eicosatetraenoyl-CoA = 1-octadecanoyl-2-(5Z,8Z,11Z,14Z-eicosatetraenoyl)-sn-glycero-3-phosphate + CoA. The catalysed reaction is 1-(9Z-octadecenoyl)-sn-glycero-3-phosphate + hexadecanoyl-CoA = 1-hexadecanoyl-2-(9Z-octadecenoyl)-sn-glycero-3-phosphate + CoA. It catalyses the reaction 1-O-(9Z-octadecenyl)-sn-glycero-3-phosphate + (5Z,8Z,11Z,14Z)-eicosatetraenoyl-CoA = 1-O-(9Z-octadecenyl)-2-(5Z,8Z,11Z,14Z-eicosatetraenoyl)-sn-glycero-3-phosphate + CoA. The enzyme catalyses a 1-acyl-sn-glycero-3-phospho-(1D-myo-inositol) + (5Z,8Z,11Z,14Z)-eicosatetraenoyl-CoA = a 1-acyl-2-(5Z,8Z,11Z,14Z-eicosatetraenoyl)-sn-glycero-3-phospho-(1D-myo-inositol) + CoA. Its pathway is phospholipid metabolism; CDP-diacylglycerol biosynthesis; CDP-diacylglycerol from sn-glycerol 3-phosphate: step 2/3. In terms of biological role, converts 1-acyl-sn-glycerol-3-phosphate (lysophosphatidic acid or LPA) into 1,2-diacyl-sn-glycerol-3-phosphate (phosphatidic acid or PA) by incorporating an acyl moiety at the sn-2 position of the glycerol backbone. Acts on LPA containing saturated or unsaturated fatty acids C16:0-C20:4 at the sn-1 position using C18:1, C20:4 or C18:2-CoA as the acyl donor. Also acts on lysophosphatidylcholine, lysophosphatidylinositol and lysophosphatidylserine using C18:1 or C20:4-CoA. Has a preference for arachidonoyl-CoA as a donor. Also has a modest lysophosphatidylinositol acyltransferase (LPIAT) activity, converts lysophosphatidylinositol (LPI) into phosphatidylinositol. This is 1-acyl-sn-glycerol-3-phosphate acyltransferase gamma (AGPAT3) from Pongo abelii (Sumatran orangutan).